Here is a 350-residue protein sequence, read N- to C-terminus: 3-isopropylmalate dehydrogenase (350 aa).

76–87 contacts NAD(+); sequence GPKWDNAPKRPE. R94, R104, R132, and D217 together coordinate substrate. Positions 217, 241, and 245 each coordinate Mg(2+). 275-287 is a binding site for NAD(+); it reads GSAPDIANQNIAN.

Belongs to the isocitrate and isopropylmalate dehydrogenases family. LeuB type 1 subfamily. As to quaternary structure, homodimer. Requires Mg(2+) as cofactor. The cofactor is Mn(2+).

It localises to the cytoplasm. It catalyses the reaction (2R,3S)-3-isopropylmalate + NAD(+) = 4-methyl-2-oxopentanoate + CO2 + NADH. The protein operates within amino-acid biosynthesis; L-leucine biosynthesis; L-leucine from 3-methyl-2-oxobutanoate: step 3/4. Functionally, catalyzes the oxidation of 3-carboxy-2-hydroxy-4-methylpentanoate (3-isopropylmalate) to 3-carboxy-4-methyl-2-oxopentanoate. The product decarboxylates to 4-methyl-2 oxopentanoate. The protein is 3-isopropylmalate dehydrogenase of Listeria innocua serovar 6a (strain ATCC BAA-680 / CLIP 11262).